A 260-amino-acid polypeptide reads, in one-letter code: Isoprenyl transferase (260 aa).

Residue D38 is part of the active site. D38 is a binding site for Mg(2+). Substrate contacts are provided by residues 39–42, W43, R51, H55, and 83–85; these read GNGR and STE. N86 (proton acceptor) is an active-site residue. Substrate-binding positions include W87, R89, R206, and 212–214; that span reads RLS. Residue E225 coordinates Mg(2+).

It belongs to the UPP synthase family. Homodimer. Requires Mg(2+) as cofactor.

In terms of biological role, catalyzes the condensation of isopentenyl diphosphate (IPP) with allylic pyrophosphates generating different type of terpenoids. The chain is Isoprenyl transferase from Heliobacterium mobile (Heliobacillus mobilis).